The primary structure comprises 171 residues: UPF0763 protein HPP12_0677 (171 aa).

This sequence belongs to the UPF0763 family.

This Helicobacter pylori (strain P12) protein is UPF0763 protein HPP12_0677.